A 547-amino-acid polypeptide reads, in one-letter code: G protein-coupled receptor associated sorting protein 3 (547 aa).

2 stretches are compositionally biased toward basic residues: residues M1–A10 and A38–T48. The interval M1–D53 is disordered.

It belongs to the GPRASP family. As to quaternary structure, homodimer.

The protein resides in the cytoplasm. It localises to the nucleus. Its function is as follows. Survival and differentiation promoting protein that plays a role in the regulation of neurosynaptogenesis. Induces phosphatase PP2A activity which results in APP dephosphorylation and inhibits BACE1-mediated processing of APP. The sequence is that of G protein-coupled receptor associated sorting protein 3 (GPRASP3) from Macaca fascicularis (Crab-eating macaque).